The following is a 230-amino-acid chain: Secretory carrier-associated membrane protein 4 (230 aa).

Over 1-39 the chain is Cytoplasmic; it reads MSGKENNFPPLPKFIPLKPCFYQNFSDEIPIEHQVLVKR. The next 4 membrane-spanning stretches (helical) occupy residues 40–60, 61–81, 105–125, and 149–169; these read IYRL…ACLA, WWIA…LLLF, FMAF…QAVG, and VVML…AVMI. Residues 170-230 are Cytoplasmic-facing; that stretch reads MKVHSIYRGT…SYPASGGQWP (61 aa). Threonine 194 carries the post-translational modification Phosphothreonine. The interval 208 to 230 is disordered; it reads FSGNSLPEYPTVPSYPASGGQWP.

Belongs to the SCAMP family.

The protein resides in the membrane. In terms of biological role, probably involved in membrane protein trafficking. This is Secretory carrier-associated membrane protein 4 (SCAMP4) from Bos taurus (Bovine).